The following is a 293-amino-acid chain: DegV domain-containing protein MG326 homolog (293 aa).

The region spanning 3–289 is the DegV domain; it reads TAIITDSTAS…IDAFSISLLL (287 aa). 2 residues coordinate hexadecanoate: threonine 62 and serine 94.

Its function is as follows. May bind long-chain fatty acids, such as palmitate, and may play a role in lipid transport or fatty acid metabolism. This chain is DegV domain-containing protein MG326 homolog, found in Mycoplasma pneumoniae (strain ATCC 29342 / M129 / Subtype 1) (Mycoplasmoides pneumoniae).